Consider the following 81-residue polypeptide: NAD(P)H-quinone oxidoreductase subunit O (81 aa).

The protein belongs to the complex I NdhO subunit family. In terms of assembly, NDH-1 can be composed of about 15 different subunits; different subcomplexes with different compositions have been identified which probably have different functions.

It localises to the cellular thylakoid membrane. It carries out the reaction a plastoquinone + NADH + (n+1) H(+)(in) = a plastoquinol + NAD(+) + n H(+)(out). The catalysed reaction is a plastoquinone + NADPH + (n+1) H(+)(in) = a plastoquinol + NADP(+) + n H(+)(out). Its function is as follows. NDH-1 shuttles electrons from an unknown electron donor, via FMN and iron-sulfur (Fe-S) centers, to quinones in the respiratory and/or the photosynthetic chain. The immediate electron acceptor for the enzyme in this species is believed to be plastoquinone. Couples the redox reaction to proton translocation, and thus conserves the redox energy in a proton gradient. Cyanobacterial NDH-1 also plays a role in inorganic carbon-concentration. In Prochlorococcus marinus (strain MIT 9303), this protein is NAD(P)H-quinone oxidoreductase subunit O.